A 670-amino-acid polypeptide reads, in one-letter code: tRNA 5-methylaminomethyl-2-thiouridine biosynthesis bifunctional protein MnmC (670 aa).

The tract at residues Met1–Ile242 is tRNA (mnm(5)s(2)U34)-methyltransferase. The interval Ile269 to Glu670 is FAD-dependent cmnm(5)s(2)U34 oxidoreductase.

The protein in the N-terminal section; belongs to the methyltransferase superfamily. tRNA (mnm(5)s(2)U34)-methyltransferase family. In the C-terminal section; belongs to the DAO family. FAD serves as cofactor.

It is found in the cytoplasm. The catalysed reaction is 5-aminomethyl-2-thiouridine(34) in tRNA + S-adenosyl-L-methionine = 5-methylaminomethyl-2-thiouridine(34) in tRNA + S-adenosyl-L-homocysteine + H(+). Its function is as follows. Catalyzes the last two steps in the biosynthesis of 5-methylaminomethyl-2-thiouridine (mnm(5)s(2)U) at the wobble position (U34) in tRNA. Catalyzes the FAD-dependent demodification of cmnm(5)s(2)U34 to nm(5)s(2)U34, followed by the transfer of a methyl group from S-adenosyl-L-methionine to nm(5)s(2)U34, to form mnm(5)s(2)U34. In Haemophilus influenzae (strain ATCC 51907 / DSM 11121 / KW20 / Rd), this protein is tRNA 5-methylaminomethyl-2-thiouridine biosynthesis bifunctional protein MnmC.